A 279-amino-acid polypeptide reads, in one-letter code: Bifunctional protein FolD (279 aa).

Residues 166-168 (GRS) and S191 each bind NADP(+).

It belongs to the tetrahydrofolate dehydrogenase/cyclohydrolase family. As to quaternary structure, homodimer.

It catalyses the reaction (6R)-5,10-methylene-5,6,7,8-tetrahydrofolate + NADP(+) = (6R)-5,10-methenyltetrahydrofolate + NADPH. The enzyme catalyses (6R)-5,10-methenyltetrahydrofolate + H2O = (6R)-10-formyltetrahydrofolate + H(+). It participates in one-carbon metabolism; tetrahydrofolate interconversion. Its function is as follows. Catalyzes the oxidation of 5,10-methylenetetrahydrofolate to 5,10-methenyltetrahydrofolate and then the hydrolysis of 5,10-methenyltetrahydrofolate to 10-formyltetrahydrofolate. This is Bifunctional protein FolD from Shouchella clausii (strain KSM-K16) (Alkalihalobacillus clausii).